The sequence spans 261 residues: tRNA pseudouridine synthase A (261 aa).

Aspartate 51 acts as the Nucleophile in catalysis. Tyrosine 109 serves as a coordination point for substrate.

This sequence belongs to the tRNA pseudouridine synthase TruA family. As to quaternary structure, homodimer.

It catalyses the reaction uridine(38/39/40) in tRNA = pseudouridine(38/39/40) in tRNA. In terms of biological role, formation of pseudouridine at positions 38, 39 and 40 in the anticodon stem and loop of transfer RNAs. This is tRNA pseudouridine synthase A from Shewanella frigidimarina (strain NCIMB 400).